The primary structure comprises 264 residues: Stress response regulator protein 1 (264 aa).

Positions 50–74 (IYSDCDNNKNNNDDDDDDDDYNKDT) are disordered. Residues 62 to 74 (DDDDDDDDYNKDT) show a composition bias toward acidic residues. The 119-residue stretch at 138 to 256 (RFLIVDDNII…LDLIGGSIDD (119 aa)) folds into the Response regulatory domain. Residue aspartate 189 is modified to 4-aspartylphosphate.

In terms of biological role, required for stress adaptation, morphogenesis and virulence. This is Stress response regulator protein 1 (SRR1) from Candida tropicalis (strain ATCC MYA-3404 / T1) (Yeast).